The sequence spans 928 residues: Probable outer membrane protein pmp11 (928 aa).

A signal peptide spans 1–24; the sequence is MKTSIPWVLVSSVLAFSCHLQSLA. One can recognise an Autotransporter domain in the interval 627–928; it reads GMEHKQGFWV…NVDVGTKLRF (302 aa).

This sequence belongs to the PMP outer membrane protein family.

It localises to the secreted. The protein localises to the cell wall. Its subcellular location is the cell outer membrane. This chain is Probable outer membrane protein pmp11 (pmp11), found in Chlamydia pneumoniae (Chlamydophila pneumoniae).